The following is a 123-amino-acid chain: Cliotide T12 (123 aa).

A signal peptide spans 1 to 28; sequence MASLRIAPLALFFFLAASVMFTVEKTEA. Residues 29 to 58 constitute a cross-link (cyclopeptide (Gly-Asp)); the sequence is GIPCGESCVFIPCITGAIGCSCKSKVCYRD. 3 disulfide bridges follow: cysteine 32–cysteine 48, cysteine 36–cysteine 50, and cysteine 41–cysteine 55. Residues 59–123 constitute a propeptide, removed in mature form; that stretch reads HVIAAEAKTM…KDHLKMSVPN (65 aa).

Post-translationally, contains 3 disulfide bonds. In terms of processing, this is a cyclic peptide.

Its function is as follows. Probably participates in a plant defense mechanism. This is Cliotide T12 from Clitoria ternatea (Butterfly pea).